We begin with the raw amino-acid sequence, 345 residues long: D-erythrose-4-phosphate dehydrogenase (345 aa).

Residue 11-12 coordinates NAD(+); it reads RI. Residues 158–160, arginine 204, 217–218, and arginine 240 contribute to the substrate site; these read SCT and TK. The active-site Nucleophile is cysteine 159. Asparagine 322 contributes to the NAD(+) binding site.

It belongs to the glyceraldehyde-3-phosphate dehydrogenase family. Epd subfamily. In terms of assembly, homotetramer.

It localises to the cytoplasm. It carries out the reaction D-erythrose 4-phosphate + NAD(+) + H2O = 4-phospho-D-erythronate + NADH + 2 H(+). Its pathway is cofactor biosynthesis; pyridoxine 5'-phosphate biosynthesis; pyridoxine 5'-phosphate from D-erythrose 4-phosphate: step 1/5. Catalyzes the NAD-dependent conversion of D-erythrose 4-phosphate to 4-phosphoerythronate. The sequence is that of D-erythrose-4-phosphate dehydrogenase from Vibrio parahaemolyticus serotype O3:K6 (strain RIMD 2210633).